Here is a 380-residue protein sequence, read N- to C-terminus: Cytochrome b (380 aa).

The next 4 membrane-spanning stretches (helical) occupy residues 34-54, 78-99, 114-134, and 179-199; these read SGSL…FLAM, WFLR…YCHI, WNVG…GYVL, and FFPF…IHLV. His-84 and His-98 together coordinate heme b. Heme b is bound by residues His-183 and His-197. An a ubiquinone-binding site is contributed by His-202. Transmembrane regions (helical) follow at residues 227 to 247, 289 to 309, 321 to 341, and 348 to 369; these read TKDT…ALLF, LGGV…PLLN, LSQA…WIGS, and YVLL…GFPI.

The protein belongs to the cytochrome b family. As to quaternary structure, the main subunits of complex b-c1 are: cytochrome b, cytochrome c1 and the Rieske protein. Heme b is required as a cofactor.

The protein resides in the mitochondrion inner membrane. Its function is as follows. Component of the ubiquinol-cytochrome c reductase complex (complex III or cytochrome b-c1 complex) that is part of the mitochondrial respiratory chain. The b-c1 complex mediates electron transfer from ubiquinol to cytochrome c. Contributes to the generation of a proton gradient across the mitochondrial membrane that is then used for ATP synthesis. This is Cytochrome b (MT-CYB) from Strongylocentrotus purpuratus (Purple sea urchin).